A 236-amino-acid polypeptide reads, in one-letter code: UPF0173 metal-dependent hydrolase DSY1309 (236 aa).

Belongs to the UPF0173 family.

In Desulfitobacterium hafniense (strain Y51), this protein is UPF0173 metal-dependent hydrolase DSY1309.